A 599-amino-acid chain; its full sequence is Sulfite reductase [NADPH] flavoprotein alpha-component (599 aa).

The Flavodoxin-like domain maps to isoleucine 64–valine 202. FMN is bound by residues serine 70–alanine 75, serine 117–glycine 120, and leucine 153–cysteine 162. Positions aspartate 234 to proline 448 constitute an FAD-binding FR-type domain. FAD contacts are provided by residues threonine 322, alanine 356, arginine 386–serine 389, threonine 404–glycine 406, tyrosine 410, and glycine 419–serine 422. Residues serine 519–arginine 520, lysine 525–glutamine 529, and aspartate 561 contribute to the NADP(+) site. Tyrosine 599 contributes to the FAD binding site.

Belongs to the NADPH-dependent sulphite reductase flavoprotein subunit CysJ family. The protein in the N-terminal section; belongs to the flavodoxin family. This sequence in the C-terminal section; belongs to the flavoprotein pyridine nucleotide cytochrome reductase family. As to quaternary structure, alpha(8)-beta(8). The alpha component is a flavoprotein, the beta component is a hemoprotein. FAD serves as cofactor. FMN is required as a cofactor.

The catalysed reaction is hydrogen sulfide + 3 NADP(+) + 3 H2O = sulfite + 3 NADPH + 4 H(+). It participates in sulfur metabolism; hydrogen sulfide biosynthesis; hydrogen sulfide from sulfite (NADPH route): step 1/1. Functionally, component of the sulfite reductase complex that catalyzes the 6-electron reduction of sulfite to sulfide. This is one of several activities required for the biosynthesis of L-cysteine from sulfate. The flavoprotein component catalyzes the electron flow from NADPH -&gt; FAD -&gt; FMN to the hemoprotein component. This chain is Sulfite reductase [NADPH] flavoprotein alpha-component, found in Shigella flexneri serotype 5b (strain 8401).